The sequence spans 180 residues: MSVLRPLDKLPGLNTATILLVGTEDALLQQLADSMLKEDCASELKVHLAKSLPLPSSVNRPRIDLIVFVVNLHSKYSLQNTEESLRHVDASFFLGKVCFLATGAGRESHCSIHRHTVVKLAHTYQSPLLYCDLEVEGFRATMAQRLVRVLQICAGHVPGVSALNLLSLLRSSEGPSLEDL.

Component of the CENPA-NAC complex, at least composed of CENPA, CENPC, CENPH, CENPM, CENPN, CENPT and CENPU. The CENPA-NAC complex interacts with the CENPA-CAD complex, composed of CENPI, CENPK, CENPL, CENPO, CENPP, CENPQ, CENPR and CENPS. In terms of tissue distribution, isoform 3 is highly expressed in spleen, and intermediately in heart, prostate and ovary. Isoform 3 is highly expressed in resting CD19 B-cells and B-lineage chronic lymphocytic leukemia (B-CLL) cells and weakly expressed in activated B-cells. Isoform 1 is selectively expressed in activated CD19 cells and weakly in resting CD19 B-cells.

Its subcellular location is the nucleus. The protein resides in the cytoplasm. It localises to the chromosome. It is found in the centromere. The protein localises to the kinetochore. Functionally, component of the CENPA-NAC (nucleosome-associated) complex, a complex that plays a central role in assembly of kinetochore proteins, mitotic progression and chromosome segregation. The CENPA-NAC complex recruits the CENPA-CAD (nucleosome distal) complex and may be involved in incorporation of newly synthesized CENPA into centromeres. This is Centromere protein M (CENPM) from Homo sapiens (Human).